The primary structure comprises 312 residues: MTVLAPPRPRSLLDFQDWLPERLSALLDNADTMHQVLERPVRKVPALQGLTVCTAFFENSTRTRISFELAARRMSADVISFAAGASSLSKGESLRDTVEVLSAYKVDAFVVRHPASGAAHLIARYSGKPVINAGDGRRAHPTQALLDAYTIRQEYGSLAGKKVAIIGDIRHSRVARSNAELLPKLGAEVVLAGPATLLPADLAALPGVTVTTDPKEAVHGAHAVMALRLQQERMNAGYLASLQEYVERYQVNEALLREAESGAIVLHPGPLNRDLEISSEVADGPQSRILKQVENGQAVRMSVLYHLLVGRD.

Residues Arg62 and Thr63 each coordinate carbamoyl phosphate. Residue Lys90 participates in L-aspartate binding. Residues Arg112, His140, and Gln143 each contribute to the carbamoyl phosphate site. Residues Arg173 and Arg228 each coordinate L-aspartate. Carbamoyl phosphate contacts are provided by Gly269 and Pro270.

The protein belongs to the aspartate/ornithine carbamoyltransferase superfamily. ATCase family. Heterododecamer (2C3:3R2) of six catalytic PyrB chains organized as two trimers (C3), and six regulatory PyrI chains organized as three dimers (R2).

It catalyses the reaction carbamoyl phosphate + L-aspartate = N-carbamoyl-L-aspartate + phosphate + H(+). It participates in pyrimidine metabolism; UMP biosynthesis via de novo pathway; (S)-dihydroorotate from bicarbonate: step 2/3. Its function is as follows. Catalyzes the condensation of carbamoyl phosphate and aspartate to form carbamoyl aspartate and inorganic phosphate, the committed step in the de novo pyrimidine nucleotide biosynthesis pathway. This Deinococcus geothermalis (strain DSM 11300 / CIP 105573 / AG-3a) protein is Aspartate carbamoyltransferase catalytic subunit.